The sequence spans 294 residues: BOI-related E3 ubiquitin-protein ligase 1 (294 aa).

Residues 168–204 (LQERVKNLYVENQIWRDLAQTNEATANNLRSNLEQVL) form a WRD domain region. Positions 183–212 (RDLAQTNEATANNLRSNLEQVLAQVDDLDA) form a coiled coil. Residues 244–281 (CKRCGELTASVLVLPCRHLCLCTVCGSSALLRTCPVCD) form an RING-type zinc finger.

As to quaternary structure, interacts with the DELLA proteins GAI, RGA, RGL1, RGL2 and RGL3.

It carries out the reaction S-ubiquitinyl-[E2 ubiquitin-conjugating enzyme]-L-cysteine + [acceptor protein]-L-lysine = [E2 ubiquitin-conjugating enzyme]-L-cysteine + N(6)-ubiquitinyl-[acceptor protein]-L-lysine.. It participates in protein degradation; proteasomal ubiquitin-dependent pathway. Its function is as follows. E3 ubiquitin-protein ligase involved in regulation of abiotic stress responses. Not involved in ubiquitination of MYB108/BOS1. Has no effect on the stability of the DELLA proteins. The sequence is that of BOI-related E3 ubiquitin-protein ligase 1 (BRG1) from Arabidopsis thaliana (Mouse-ear cress).